Reading from the N-terminus, the 392-residue chain is Phosphoglycerate kinase (392 aa).

Substrate-binding positions include 21–23 (DLN), arginine 36, 59–62 (HLGR), arginine 113, and arginine 146. ATP contacts are provided by residues lysine 197, glutamate 319, and 345-348 (GGDT).

Belongs to the phosphoglycerate kinase family. In terms of assembly, monomer.

The protein resides in the cytoplasm. The enzyme catalyses (2R)-3-phosphoglycerate + ATP = (2R)-3-phospho-glyceroyl phosphate + ADP. Its pathway is carbohydrate degradation; glycolysis; pyruvate from D-glyceraldehyde 3-phosphate: step 2/5. The protein is Phosphoglycerate kinase of Alkalilimnicola ehrlichii (strain ATCC BAA-1101 / DSM 17681 / MLHE-1).